The primary structure comprises 93 residues: Small ribosomal subunit protein uS19 (93 aa).

It belongs to the universal ribosomal protein uS19 family.

In terms of biological role, protein S19 forms a complex with S13 that binds strongly to the 16S ribosomal RNA. The polypeptide is Small ribosomal subunit protein uS19 (Micrococcus luteus (strain ATCC 4698 / DSM 20030 / JCM 1464 / CCM 169 / CCUG 5858 / IAM 1056 / NBRC 3333 / NCIMB 9278 / NCTC 2665 / VKM Ac-2230) (Micrococcus lysodeikticus)).